A 610-amino-acid polypeptide reads, in one-letter code: Elongation factor 4 (610 aa).

Residues 11–193 form the tr-type G domain; that stretch reads EKIRNFSIIA…QIVEKVPAPS (183 aa). Residues 23-28 and 140-143 each bind GTP; these read DHGKST and NKID.

Belongs to the TRAFAC class translation factor GTPase superfamily. Classic translation factor GTPase family. LepA subfamily.

The protein resides in the cell membrane. The catalysed reaction is GTP + H2O = GDP + phosphate + H(+). Its function is as follows. Required for accurate and efficient protein synthesis under certain stress conditions. May act as a fidelity factor of the translation reaction, by catalyzing a one-codon backward translocation of tRNAs on improperly translocated ribosomes. Back-translocation proceeds from a post-translocation (POST) complex to a pre-translocation (PRE) complex, thus giving elongation factor G a second chance to translocate the tRNAs correctly. Binds to ribosomes in a GTP-dependent manner. The polypeptide is Elongation factor 4 (Streptococcus uberis (strain ATCC BAA-854 / 0140J)).